We begin with the raw amino-acid sequence, 113 residues long: Small ribosomal subunit protein mS41 (113 aa).

A mitochondrion-targeting transit peptide spans 1-22; sequence MLILKRIFIIRNFIFPFSNCRY.

It belongs to the mitochondrion-specific ribosomal protein mS41 family. Component of the mitochondrial small ribosomal subunit (mt-SSU). Mature yeast 74S mitochondrial ribosomes consist of a small (37S) and a large (54S) subunit. The 37S small subunit contains a 15S ribosomal RNA (15S mt-rRNA) and at least 32 different proteins. The 54S large subunit contains a 21S rRNA (21S mt-rRNA) and at least 45 different proteins.

The protein resides in the mitochondrion. Functionally, component of the mitochondrial ribosome (mitoribosome), a dedicated translation machinery responsible for the synthesis of mitochondrial genome-encoded proteins, including at least some of the essential transmembrane subunits of the mitochondrial respiratory chain. The mitoribosomes are attached to the mitochondrial inner membrane and translation products are cotranslationally integrated into the membrane. mS41 is involved in telomere length regulation. The protein is Small ribosomal subunit protein mS41 (fyv4) of Schizosaccharomyces pombe (strain 972 / ATCC 24843) (Fission yeast).